The chain runs to 368 residues: Probable endopolygalacturonase A (368 aa).

A signal peptide spans 1–18; it reads MRSVKLFGLAALGSLGAA. A propeptide spanning residues 19 to 31 is cleaved from the precursor; sequence APAPSRVSDLTKR. Cys-35 and Cys-50 are joined by a disulfide. PbH1 repeat units lie at residues 140–162, 167–192, 193–214, 215–235, 244–265, 273–295, and 307–352; these read LEDS…SVQA, LIDI…DISE, STGV…AINS, GENI…SIGS, VKNV…RIKT, VSQV…VIEQ, and TTGV…DITG. Asp-207 functions as the Proton donor in the catalytic mechanism. Cysteines 209 and 225 form a disulfide. His-229 is an active-site residue. A glycan (N-linked (GlcNAc...) asparagine) is linked at Asn-246. Disulfide bonds link Cys-335/Cys-340 and Cys-359/Cys-368.

Belongs to the glycosyl hydrolase 28 family.

The protein localises to the secreted. It catalyses the reaction (1,4-alpha-D-galacturonosyl)n+m + H2O = (1,4-alpha-D-galacturonosyl)n + (1,4-alpha-D-galacturonosyl)m.. Its function is as follows. Involved in maceration and soft-rotting of plant tissue. Hydrolyzes the 1,4-alpha glycosidic bonds of de-esterified pectate in the smooth region of the plant cell wall. In Aspergillus fumigatus (strain CBS 144.89 / FGSC A1163 / CEA10) (Neosartorya fumigata), this protein is Probable endopolygalacturonase A (pgaA).